A 118-amino-acid chain; its full sequence is Cysteine-rich and transmembrane domain-containing protein 1 (118 aa).

2 stretches are compositionally biased toward low complexity: residues 1–54 (MNYE…QGYP) and 64–74 (YTAQPGYQGYP). Residues 1-82 (MNYEQPPAYT…YPQPGPPTNT (82 aa)) are disordered. A helical membrane pass occupies residues 95–112 (SGEQACLATCWAALCCCC).

Belongs to the CYSTM1 family.

It is found in the membrane. The protein is Cysteine-rich and transmembrane domain-containing protein 1 (cystm1) of Danio rerio (Zebrafish).